We begin with the raw amino-acid sequence, 673 residues long: Vasorin (673 aa).

Positions 1 to 23 are cleaved as a signal peptide; it reads MCSRVPLLLPLLLLLALGPGVQG. The 28-residue stretch at 24-51 folds into the LRRNT domain; it reads CPSGCQCSQPQTVFCTARQGTTVPRDVP. At 24–575 the chain is on the extracellular side; the sequence is CPSGCQCSQP…VTQAREGNLP (552 aa). 10 LRR repeats span residues 52 to 74, 77 to 98, 101 to 122, 125 to 146, 149 to 170, 171 to 191, 193 to 214, 217 to 238, 240 to 262, and 265 to 287; these read PDTV…SFAG, GLQL…VFQP, NLSN…TFRG, RLER…AFDT, RLLE…RLPR, LLLL…ILDT, NVEA…LFSR, NLHD…IRGL, GLTR…DLAG, and ALQE…SGLF. N-linked (GlcNAc...) asparagine glycosylation occurs at Asn-101. The N-linked (GlcNAc...) (complex) asparagine glycan is linked to Asn-117. Asn-273 carries an N-linked (GlcNAc...) asparagine glycan. An LRRCT domain is found at 298-351; the sequence is NPFNCVCPLSWFGPWVRESHVTLASPEETRCHFPPKNAGRLLLELDYADFGCPA. Residues 358-370 show a composition bias toward low complexity; it reads VPTTRPVVREPTA. The tract at residues 358 to 404 is disordered; it reads VPTTRPVVREPTALSSSLAPTWLSPTEPATEAPSPPSTAPPTVGPVP. Residues 390 to 404 show a composition bias toward pro residues; the sequence is PSPPSTAPPTVGPVP. One can recognise an EGF-like domain in the interval 405–442; that stretch reads QPQDCPPSTCLNGGTCHLGTRHHLACLCPEGFTGLYCE. 3 cysteine pairs are disulfide-bonded: Cys-409–Cys-420, Cys-414–Cys-430, and Cys-432–Cys-441. The region spanning 460–558 is the Fibronectin type-III domain; that stretch reads PPRSLTLGIE…ACGEAHTPPA (99 aa). N-linked (GlcNAc...) asparagine glycans are attached at residues Asn-500 and Asn-528. A helical membrane pass occupies residues 576–596; sequence LLIAPALAAVLLAALAAVGAA. Residues 597 to 673 are Cytoplasmic-facing; the sequence is YCVRRGRAMA…QSPLHAKPYI (77 aa).

In terms of assembly, interacts with TGFB1, TGFB2 and TGFB3. N-glycosylated. N-glycan heterogeneity at Asn-117: Hex5HexNAc4 (minor), dHex1Hex5HexNAc4 (major), Hex6HexNAc5 (minor) and dHex1Hex6HexNAc5 (minor). Expressed at highest levels in aorta, at intermediate levels in kidney and placenta and at lowest levels in brain, heart, liver, lung and skeletal muscle. Within the aorta, the strongest expression is found in the tunica media of the proximal ascending aorta, the descending thoracic aorta, the abdominal aorta and the coronary arteries. Within the kidney, expression is found in the interstitial cells.

It is found in the membrane. The protein resides in the secreted. Functionally, may act as an inhibitor of TGF-beta signaling. The protein is Vasorin (VASN) of Homo sapiens (Human).